The chain runs to 403 residues: Zinc finger CCHC domain-containing protein 3 (403 aa).

The interval 1–158 is disordered; it reads MATGGGAEEE…PLQDEPAAAA (158 aa). Basic and acidic residues-rich tracts occupy residues 26–38 and 47–65; these read ARGEEADGGREKM and LAEKKGEFREPRPPRREEE. Residues 67–79 show a composition bias toward gly residues; it reads GGGGGSAGLGGPA. Over residues 95 to 121 the composition is skewed to basic and acidic residues; it reads GDPKGRRRDPAGEAVDPRKKKGAAEAG. Positions 128–139 are enriched in low complexity; the sequence is AAAAAMATPARP. Phosphotyrosine is present on Y201. 3 consecutive CCHC-type zinc fingers follow at residues 335 to 350, 352 to 368, and 372 to 387; these read CFKCGSRTHMSGSCTQ, RCFRCGEEGHLSPYCRK, and CNLCGKRGHAFAQCPK.

In terms of assembly, interacts with CGAS. Interacts with RIGI. Interacts with IFIH1/MDA5.

Its subcellular location is the cytoplasm. In terms of biological role, nucleic acid-binding protein involved in innate immune response to DNA and RNA viruses. Binds DNA and RNA in the cytoplasm and acts by promoting recognition of viral nucleic acids by virus sensors, such as RIGI, IFIH1/MDA5 and CGAS. Acts as a co-sensor for recognition of double-stranded DNA (dsDNA) by cGAS in the cytoplasm, thereby playing a role in innate immune response to cytosolic dsDNA and DNA virus. Binds dsDNA and probably acts by promoting sensing of dsDNA by CGAS, leading to enhance CGAS oligomerization and activation. Promotes sensing of viral RNA by RIGI-like receptors proteins RIGI and IFIH1/MDA5 via two mechanisms: binds double-stranded RNA (dsRNA), enhancing the binding of RIGI and IFIH1/MDA5 to dsRNA and promotes 'Lys-63'-linked ubiquitination and subsequent activation of RIGI and IFIH1/MDA5. The chain is Zinc finger CCHC domain-containing protein 3 from Homo sapiens (Human).